The sequence spans 593 residues: ATPase family AAA domain-containing protein 3-A (593 aa).

The disordered stretch occupies residues 1 to 64 (MSWLFGLNKG…AKAARELDQS (64 aa)). Over 1–242 (MSWLFGLNKG…FRTFISDWDK (242 aa)) the chain is Mitochondrial intermembrane. The segment covering 15–27 (PGVPGFPEPPSPP) has biased composition (pro residues). 2 stretches are compositionally biased toward basic and acidic residues: residues 33–44 (GGDKNKPKDKWS) and 53–64 (RAAKAARELDQS). Residues 52-215 (ERAAKAAREL…QIRLKAAEHR (164 aa)) adopt a coiled-coil conformation. Residues 243–260 (VTATVAGLTLLAVGVYTA) form a helical membrane-spanning segment. At 261–593 (KNATGVAGRY…LQPLLEGTQV (333 aa)) the chain is on the mitochondrial matrix side. 348-355 (GPPGTGKT) is a binding site for ATP.

The protein belongs to the AAA ATPase family. In terms of assembly, can form homooligomers. Homodimer formation at the N-terminus may be regulated by ATP and is required for the interaction with the inner surface of the mitochondrial outer membrane and correct mitochondrial homeostasis.

Its subcellular location is the mitochondrion inner membrane. The protein localises to the mitochondrion matrix. It localises to the mitochondrion nucleoid. It catalyses the reaction ATP + H2O = ADP + phosphate + H(+). Functionally, essential for mitochondrial network organization, mitochondrial metabolism and cell growth at organism and cellular level. May play an important role in mitochondrial protein synthesis. May also participate in mitochondrial DNA replication. May bind to mitochondrial DNA D-loops and contribute to nucleoid stability. Required for enhanced channeling of cholesterol for hormone-dependent steroidogenesis. Involved in mitochondrial-mediated antiviral innate immunity. Required to protect mitochondria from the PERK-mediated unfolded protein response: specifically inhibits the activity of EIF2AK3/PERK at mitochondria-endoplasmic reticulum contact sites, thereby providing a safe haven for mitochondrial protein translation during endoplasmic reticulum stress. Ability to inhibit EIF2AK3/PERK is independent of its ATPase activity. Also involved in the mitochondrial DNA damage response by promoting signaling between damaged genomes and the mitochondrial membrane, leading to activation of the integrated stress response (ISR). The sequence is that of ATPase family AAA domain-containing protein 3-A (atad3-a) from Xenopus laevis (African clawed frog).